The sequence spans 459 residues: Putrescine aminotransferase (459 aa).

Pyridoxal 5'-phosphate-binding positions include 150–151 (GT) and Gln274. Lys300 carries the post-translational modification N6-(pyridoxal phosphate)lysine. Residue Thr332 coordinates pyridoxal 5'-phosphate.

The protein belongs to the class-III pyridoxal-phosphate-dependent aminotransferase family. Putrescine aminotransferase subfamily. Requires pyridoxal 5'-phosphate as cofactor.

It catalyses the reaction an alkane-alpha,omega-diamine + 2-oxoglutarate = an omega-aminoaldehyde + L-glutamate. The enzyme catalyses putrescine + 2-oxoglutarate = 1-pyrroline + L-glutamate + H2O. The catalysed reaction is cadaverine + 2-oxoglutarate = 5-aminopentanal + L-glutamate. The protein operates within amine and polyamine degradation; putrescine degradation; 4-aminobutanal from putrescine (transaminase route): step 1/1. In terms of biological role, catalyzes the aminotransferase reaction from putrescine to 2-oxoglutarate, leading to glutamate and 4-aminobutanal, which spontaneously cyclizes to form 1-pyrroline. This is the first step in one of two pathways for putrescine degradation, where putrescine is converted into 4-aminobutanoate (gamma-aminobutyrate or GABA) via 4-aminobutanal. Also functions as a cadaverine transaminase in a a L-lysine degradation pathway to succinate that proceeds via cadaverine, glutarate and L-2-hydroxyglutarate. The sequence is that of Putrescine aminotransferase from Escherichia coli O9:H4 (strain HS).